The primary structure comprises 1420 residues: Mediator of RNA polymerase II transcription subunit 13 (1420 aa).

Phosphoserine is present on residues serine 370, serine 375, and serine 425. Over residues 416-427 (TTVSNDLENSPL) the composition is skewed to polar residues. Residues 416 to 511 (TTVSNDLENS…TNESNKSISD (96 aa)) are disordered. A compositionally biased stretch (basic and acidic residues) spans 429–439 (TELEANGRSLE). Over residues 440 to 453 (KVNNSVSKTGSVDT) the composition is skewed to polar residues. Basic and acidic residues predominate over residues 454-484 (LHNKEGTLEQREQNENLPSDKSDSMVDKELF). Low complexity predominate over residues 494–508 (GDSNKSNSTNESNKS). Position 601 is a phosphothreonine (threonine 601). Phosphoserine; by PKA is present on serine 608. Residue serine 636 is modified to Phosphoserine. Positions 653-691 (LSSSEEEEDEEENGSSDEDLKSLNVRDDMKPSDNISTNT) are disordered. The span at 655–669 (SSEEEEDEEENGSSD) shows a compositional bias: acidic residues. Residues 670–683 (EDLKSLNVRDDMKP) are compositionally biased toward basic and acidic residues. Serine 748 is modified (phosphoserine).

Belongs to the Mediator complex subunit 13 family. In terms of assembly, component of the SRB8-11 complex which consists of SRB8, SSN2/SRB9, SSN3/SRB10 and SSN8/SRB11. The SRB8-11 complex associates with the Mediator complex. The SSN3/SRB10 and SSN8/SRB11 kinase-cyclin pair also associate with the RNA polymerase II holoenzyme. Phosphorylated. PKA-dependent phosphorylation at 'Ser-608' is enhanced by activation of the RAS signaling pathway.

It is found in the nucleus. Component of the SRB8-11 complex. The SRB8-11 complex is a regulatory module of the Mediator complex which is itself involved in regulation of basal and activated RNA polymerase II-dependent transcription. The SRB8-11 complex may be involved in the transcriptional repression of a subset of genes regulated by Mediator. It may inhibit the association of the Mediator complex with RNA polymerase II to form the holoenzyme complex. The SRB8-11 complex phosphorylates the C-terminal domain (CTD) of the largest subunit of RNA polymerase II RPB1 at serines 2 and 5. This Saccharomyces cerevisiae (strain ATCC 204508 / S288c) (Baker's yeast) protein is Mediator of RNA polymerase II transcription subunit 13 (SSN2).